The following is a 185-amino-acid chain: Dense granule protein 2 (185 aa).

Residues 1–23 form the signal peptide; sequence MFAVKHCLLVVAVGALVNVSVRA. Asn18 carries an N-linked (GlcNAc...) asparagine glycan. Disordered stretches follow at residues 41 to 75 and 142 to 185; these read GKPLDERAVGGKGEHTPPLPDERQQEPEEPVSQRA and ANVE…DFSQ. Over residues 43-66 the composition is skewed to basic and acidic residues; that stretch reads PLDERAVGGKGEHTPPLPDERQQE.

In terms of processing, may also be O-glycosylated. Post-translationally, the N-terminus is blocked.

The protein resides in the parasitophorous vacuole. Major granular component involved in excreted-secreted antigen (ESA) immunity. Possibly acts in conjunction with GRA1. The sequence is that of Dense granule protein 2 (GRA2) from Toxoplasma gondii.